Consider the following 527-residue polypeptide: Putative zinc finger CCCH domain-containing protein 64 (527 aa).

The segment at 103–127 (GQLRSTQTTSKRKAASRKGQREQRV) is disordered. Residues 213-241 (RPGEPFCRYYMKFGECKHMTFCKYNHPKD) form a C3H1-type zinc finger.

The polypeptide is Putative zinc finger CCCH domain-containing protein 64 (Oryza sativa subsp. japonica (Rice)).